Consider the following 210-residue polypeptide: Redox-sensing transcriptional repressor Rex (210 aa).

Positions 17-56 (KYHRYLNELMKNDVDRISSKELGEKIGFTASQIRQDLNCF) form a DNA-binding region, H-T-H motif. 91-96 (GAGNIG) is a binding site for NAD(+).

Belongs to the transcriptional regulatory Rex family. Homodimer.

Its subcellular location is the cytoplasm. In terms of biological role, modulates transcription in response to changes in cellular NADH/NAD(+) redox state. The protein is Redox-sensing transcriptional repressor Rex of Clostridium botulinum (strain Eklund 17B / Type B).